The primary structure comprises 458 residues: MSDNKFIIGSEEWCAFPALGVPAIKARVDSGARTSSIHAVNIRPFKREGEPWVSFELHPIQNSRKIILRCESKVIDRRNIKSSNGEIEKRYVIASVIQLGGHAWEVELTLTNRDSMGYRMLLGREAMSNKTLVDPSESFCLGQQNDVEVEQLYGVKSAKKSGLKIGLLASNPDLYSNRRIIEAGEQRGHEMVFLNIKQCYLKLDASEPEVHYRGGRILNDLDAVIPRIRPSMTFYGCALTRHFESLNIMALNTSDAITRSRDKLFSLQLLQKNNLDIPTSGFANSPVDTKDLIDMVGGAPLIVKLLEGTQGKGVVLAETTKAAESVINAFKSLHVNLLVQEFIKEAQGKDLRCFVIDGKVVASIERTAAPGEFRANIHQGGSASIVSVSAAERQLALKAAKTMGLRVAGVDIIRSSRGPLLLEINSSPGLEGIESATGIDIAGAMIDSIEKKLGWKAE.

The unknown stretch occupies residues 1–162 (MSDNKFIIGS…YGVKSAKKSG (162 aa)). The segment at 163-458 (LKIGLLASNP…IEKKLGWKAE (296 aa)) is alpha-L-glutamate ligase. Positions 267–450 (LQLLQKNNLD…IAGAMIDSIE (184 aa)) constitute an ATP-grasp domain. ATP-binding positions include Lys-304, 341-342 (EF), Asp-350, and 374-376 (RAN). Asp-411, Glu-423, and Asn-425 together coordinate Mg(2+). Asp-411, Glu-423, and Asn-425 together coordinate Mn(2+).

It in the C-terminal section; belongs to the RimK family. Mg(2+) is required as a cofactor. It depends on Mn(2+) as a cofactor.

The sequence is that of Probable alpha-L-glutamate ligase from Shewanella halifaxensis (strain HAW-EB4).